The following is a 191-amino-acid chain: Orotate phosphoribosyltransferase (191 aa).

114–122 (EDVITTGGS) contacts 5-phospho-alpha-D-ribose 1-diphosphate. Residues T118 and R146 each coordinate orotate.

This sequence belongs to the purine/pyrimidine phosphoribosyltransferase family. PyrE subfamily. In terms of assembly, homodimer. It depends on Mg(2+) as a cofactor.

It catalyses the reaction orotidine 5'-phosphate + diphosphate = orotate + 5-phospho-alpha-D-ribose 1-diphosphate. Its pathway is pyrimidine metabolism; UMP biosynthesis via de novo pathway; UMP from orotate: step 1/2. Functionally, catalyzes the transfer of a ribosyl phosphate group from 5-phosphoribose 1-diphosphate to orotate, leading to the formation of orotidine monophosphate (OMP). In Caldicellulosiruptor saccharolyticus (strain ATCC 43494 / DSM 8903 / Tp8T 6331), this protein is Orotate phosphoribosyltransferase.